The following is a 423-amino-acid chain: Lysosomal acid phosphatase (423 aa).

The first 30 residues, 1–30 (MAGKRSGWSRAALLQLLLGVNLVVMPPTRA), serve as a signal peptide directing secretion. The Lumenal segment spans residues 31 to 380 (RSLRFVTLLY…QLASGPADTE (350 aa)). Histidine 42 serves as the catalytic Nucleophile. N-linked (GlcNAc...) asparagine glycosylation is found at asparagine 92, asparagine 133, asparagine 167, asparagine 177, asparagine 191, and asparagine 267. Intrachain disulfides connect cysteine 159–cysteine 370, cysteine 212–cysteine 310, and cysteine 345–cysteine 349. Aspartate 287 (proton donor) is an active-site residue. Asparagine 322 and asparagine 331 each carry an N-linked (GlcNAc...) asparagine glycan. Residues 381 to 401 (VIVALAVCGSILFLLIVLLLT) form a helical membrane-spanning segment. Over 402-423 (VLFRMQAQPPGYRHVADGEDHA) the chain is Cytoplasmic.

This sequence belongs to the histidine acid phosphatase family. The membrane-bound form is converted to the soluble form by sequential proteolytic processing. First, the C-terminal cytoplasmic tail is removed. Cleavage by a lysosomal protease releases the soluble form in the lysosome lumen. In terms of processing, N-glycosylated. The intermediates formed during enzymatic deglycosylation suggest that all eight predicted N-glycosylation sites are used.

Its subcellular location is the lysosome membrane. It localises to the lysosome lumen. It carries out the reaction a phosphate monoester + H2O = an alcohol + phosphate. This is Lysosomal acid phosphatase (ACP2) from Homo sapiens (Human).